A 232-amino-acid chain; its full sequence is Dehydrin DHN3 (232 aa).

Polar residues predominate over residues 1 to 14; the sequence is MSQYQNQYGAQTGM. Disordered regions lie at residues 1–66 and 140–232; these read MSQY…QHRG and EHHG…CTGH. Residues 49-60 show a composition bias toward gly residues; the sequence is TTGGATGQGHGH. A compositionally biased stretch (basic and acidic residues) spans 140–157; the sequence is EHHGDKKGVMDKIKEKIP. Residues 159-168 show a composition bias toward polar residues; the sequence is TEQSRTNTDG. Residues 198 to 223 show a composition bias toward basic and acidic residues; the sequence is EQQDVHHGDEQHGEKKGIMEKIKEKL.

The protein belongs to the plant dehydrin family.

In Pisum sativum (Garden pea), this protein is Dehydrin DHN3 (DHN3).